Here is a 109-residue protein sequence, read N- to C-terminus: Glutaredoxin-C13 (109 aa).

Residues 2–108 (AEMVARLASE…PMLKNAGALW (107 aa)) form the Glutaredoxin domain. Cysteines 22 and 25 form a disulfide. The Responsive for interaction with TGA factors motif lies at 106–109 (ALWL).

Belongs to the glutaredoxin family. CC-type subfamily.

The protein localises to the cytoplasm. It is found in the nucleus. Its function is as follows. Has a glutathione-disulfide oxidoreductase activity in the presence of NADPH and glutathione reductase. Reduces low molecular weight disulfides and proteins. The protein is Glutaredoxin-C13 (GRXC13) of Oryza sativa subsp. japonica (Rice).